An 864-amino-acid chain; its full sequence is Translation initiation factor IF-2 (864 aa).

A compositionally biased stretch (basic and acidic residues) spans D140 to N171. Residues D140–K179 form a disordered region. The region spanning I364–K533 is the tr-type G domain. The tract at residues G373–T380 is G1. G373 to T380 is a binding site for GTP. The segment at G398–N402 is G2. Positions D419–G422 are G3. Residues D419–H423 and N473–D476 contribute to the GTP site. The segment at N473 to D476 is G4. The interval S509 to K511 is G5.

This sequence belongs to the TRAFAC class translation factor GTPase superfamily. Classic translation factor GTPase family. IF-2 subfamily.

It is found in the cytoplasm. Its function is as follows. One of the essential components for the initiation of protein synthesis. Protects formylmethionyl-tRNA from spontaneous hydrolysis and promotes its binding to the 30S ribosomal subunits. Also involved in the hydrolysis of GTP during the formation of the 70S ribosomal complex. This chain is Translation initiation factor IF-2, found in Buchnera aphidicola subsp. Acyrthosiphon pisum (strain Tuc7).